The primary structure comprises 645 residues: MNTEIKYLELLSKTFKNIAETSTEIINLQAIMNLPKGTEHFMTDIHGEYEAFNHVLRNGSGTIRNKIEEAYGNKLTENEKKELASIIYYPKEKVELMQNKDNFNIDRWMITIIYRLIEVCKVVCSKYTRSKVRKAMTKDFEYILQELLYEKKELANKKEYFDSIVDTIISIDRGKEFIIAICNLIQRLNIDHLHIVGDIYDRGPFPHLIMDTLAEYSNLDIQWGNHDILWIGAALGNKACIANVIRICCRYNNNDILEEAYGINLLPFATFAMKYYGDDPCKRFRAKEGVDSDLIAQMHKAMSIIQFKVEGLYSERNPELEMSSRESLKHINYEKGTINLNGVEYPLNDTNFPTVNPENPLELLEEEAELLDKLQASFLGSEKLQKHMQLLFAKGGMYLKYNSNLLFHACIPMEPNGEFSELFVEDGYYKGKALMDKIDNIVRQAYYDRKNVEVNKKHRDFIWYLWAGRLSPLFGKDVMKTFERYFIDDKTTHKEIKNPYHKLINDEKVCDKIFEEFGLNPRTSHIINGHIPVKVKEGESPVKANGKLLIIDGGFSRAYQSTTGIAGYTLTYNSYGMKLASHLKFISKEAAIKDGTDMISSHIIVETKSKRMKVKDTDIGKSIQTQINDLKKLLKAYRIGLIKSN.

This sequence belongs to the FBPase class 3 family. Requires Mn(2+) as cofactor.

It catalyses the reaction beta-D-fructose 1,6-bisphosphate + H2O = beta-D-fructose 6-phosphate + phosphate. It participates in carbohydrate biosynthesis; gluconeogenesis. This is Fructose-1,6-bisphosphatase class 3 from Fusobacterium nucleatum subsp. nucleatum (strain ATCC 25586 / DSM 15643 / BCRC 10681 / CIP 101130 / JCM 8532 / KCTC 2640 / LMG 13131 / VPI 4355).